The sequence spans 272 residues: Acyl-[acyl-carrier-protein]--UDP-N-acetylglucosamine O-acyltransferase (272 aa).

Belongs to the transferase hexapeptide repeat family. LpxA subfamily. As to quaternary structure, homotrimer.

It is found in the cytoplasm. It carries out the reaction a (3R)-hydroxyacyl-[ACP] + UDP-N-acetyl-alpha-D-glucosamine = a UDP-3-O-[(3R)-3-hydroxyacyl]-N-acetyl-alpha-D-glucosamine + holo-[ACP]. It participates in glycolipid biosynthesis; lipid IV(A) biosynthesis; lipid IV(A) from (3R)-3-hydroxytetradecanoyl-[acyl-carrier-protein] and UDP-N-acetyl-alpha-D-glucosamine: step 1/6. Its function is as follows. Involved in the biosynthesis of lipid A, a phosphorylated glycolipid that anchors the lipopolysaccharide to the outer membrane of the cell. This is Acyl-[acyl-carrier-protein]--UDP-N-acetylglucosamine O-acyltransferase from Rhizobium leguminosarum bv. trifolii (strain WSM2304).